We begin with the raw amino-acid sequence, 285 residues long: MTYPLLTRKTLMKKTPLALLLTLGLLQTPLAAFAATAPLDLVGPVSDYKIYVTENIEELVSHTQKFTDAVKKGDIATAKKLYAPTRVYYESVEPIAELFSDLDASIDSRVDDHEQGVAAEDFTGFHRLEYALFSQNTTKDQGPIADKLLSDVKDLEKRVADLTFPPEKVVGGAAALLEEVAATKISGEEDRYSHTDLYDFQGNIDGAKKIVDLFRPQIEQQDKAFSSKVDKNFATVDKILAKYKTKDGGFETYDKVKENDRKALVGPVNTLAEDLSTLRGKLGLN.

The N-terminal stretch at Met-1–Ala-34 is a signal peptide.

Belongs to the EfeM/EfeO family. As to quaternary structure, component of the iron transporter efeUOB/M complex composed of EfeU, EfeM and EfeB.

Its subcellular location is the periplasm. Its function is as follows. Part of the iron transporter system efeUOB/M involved in iron import. Specifically binds Fe(3+), which is produced by EfeB-mediated oxidation of Fe(2+), and delivers it to the cell inner membrane permease EfeU. Also binds Zn(2+) and Cu(2+) in vitro. In Pseudomonas syringae pv. syringae (strain B728a), this protein is Iron uptake system component EfeM.